The following is a 154-amino-acid chain: Ribosome maturation factor RimP (154 aa).

This sequence belongs to the RimP family.

The protein localises to the cytoplasm. In terms of biological role, required for maturation of 30S ribosomal subunits. The polypeptide is Ribosome maturation factor RimP (Thioalkalivibrio sulfidiphilus (strain HL-EbGR7)).